We begin with the raw amino-acid sequence, 489 residues long: Protein-export membrane protein SecD (489 aa).

The next 6 membrane-spanning stretches (helical) occupy residues 17–37, 328–348, 356–376, 384–404, 428–448, and 450–470; these read VLIVLVLVILSVLSIYAIPPA, FIQIVCIAAAILGLLAVAFMV, SIVVPMILVNLSEIIILLGIA, LASIAGLIAVIGTGIDQLVVI, LGIITVSASTTIFAMLPLALM, and LSTLKGFAIITILGVLIGVIF.

The protein belongs to the SecD/SecF family. SecD subfamily. Part of the protein translocation apparatus. Forms a complex with SecF.

It localises to the cell membrane. Functionally, involved in protein export. The protein is Protein-export membrane protein SecD of Methanolacinia petrolearia (strain DSM 11571 / OCM 486 / SEBR 4847) (Methanoplanus petrolearius).